A 967-amino-acid chain; its full sequence is Muscular LMNA-interacting protein (967 aa).

The residue at position 129 (S129) is a Phosphoserine. Disordered regions lie at residues 132 to 154, 302 to 336, 432 to 462, 506 to 628, 644 to 685, 786 to 838, and 929 to 967; these read EDEA…IATR, GLAS…ASLT, QKVK…HQAS, GSTL…SASH, QTLQ…TPSL, SMHS…SQLT, and FSVR…DSKE. The segment at 144 to 811 is required for interaction with ISL1; sequence PPGGPGNIAT…GSETIKTPTT (668 aa). A compositionally biased stretch (low complexity) spans 437–455; it reads TPPTSKKSLSSGSLTTGST. Polar residues predominate over residues 508–523; sequence TLRSNTTSPQPQTDTF. Positions 528–541 are enriched in low complexity; the sequence is VPSVTPVLSPLSSS. Over residues 543 to 556 the composition is skewed to basic and acidic residues; it reads GRKDGDSRTPEKNR. Polar residues-rich tracts occupy residues 558 to 567 and 658 to 685; these read ICIQPSTLAS and GSAT…TPSL. At S792 the chain carries Phosphoserine. A compositionally biased stretch (polar residues) spans 800-811; it reads MLGSETIKTPTT. A compositionally biased stretch (low complexity) spans 826-835; that stretch reads SSSSSTASES. Positions 938–947 are enriched in polar residues; it reads SPTLLSQDTY. Positions 958–967 are enriched in basic and acidic residues; the sequence is PEHDTLDSKE.

As to quaternary structure, directly interacts with LMNA. Interacts with ISL1 (via N-terminal domain); the interaction represses ISL1 transactivator activity. Interactions of ISL1 with MLIP1 and GCN5/KAT2A may be mutually exclusive. In terms of processing, may be ubiquitinated by UBE3C ubiquitin ligase; ubiquitination is followed by protein degradation. In terms of tissue distribution, predominantly expressed in the heart and skeletal muscle, but detected at lower levels in the lung and brain (at protein level). Also detected in smooth muscle, thymus and kidney. In brain, expressed by a subpopulation of cells within the hippocampus and cortex. In heart, expressed by cardiomyocytes. Expression is reduced in hypertrophic hearts at the transcript level. However, expression in hypertrophic hearts induced by transverse aortic constriction do not differ from control at the protein level.

It is found in the nucleus. Its subcellular location is the nucleus envelope. The protein resides in the PML body. The protein localises to the cytoplasm. It localises to the cytosol. It is found in the cell membrane. Its subcellular location is the sarcolemma. In terms of biological role, required for myoblast differentiation into myotubes, possibly acting as a transcriptional regulator of the myogenic program. Required for cardiac adaptation to stress through integrated regulation of the AKT/mTOR pathways and FOXO1. Regulates cardiac homeostasis and plays a role in the protection against cardiac hypertrophy. Binds chromatin. May act as a transcriptional cofactor for ISL1, repressing its transcriptional activity. May also repress MYOCD transcriptional activity. The chain is Muscular LMNA-interacting protein from Mus musculus (Mouse).